A 422-amino-acid polypeptide reads, in one-letter code: Nucleoside transporter 1 (422 aa).

Residues 1–38 (MSTGKESSKAYADIESRGDYKDDGKKGSTLSSKQHFML) lie on the Cytoplasmic side of the membrane. The chain crosses the membrane as a helical span at residues 39–59 (SLTFILIGLSSLNVWNTALGL). Trp-53 contacts inosine. Residues 60-63 (NINF) are Extracellular-facing. A helical membrane pass occupies residues 64–82 (KYNTFQITGLVCSSIVALF). At 83 to 87 (VEIPK) the chain is on the cytoplasmic side. Residues 88–107 (IMLPFLLGGLSILCAGFQIS) form a helical membrane-spanning segment. The Extracellular segment spans residues 108 to 116 (HSFFTDTQF). The helical transmembrane segment at 117 to 139 (DTYCLVAFIVIGVVAGLAQTIAF) threads the bilayer. Inosine is bound at residue Gln-135. Residues 140–149 (NIGSTMEDNM) lie on the Cytoplasmic side of the membrane. The chain crosses the membrane as a helical span at residues 150–174 (GGYMSAGIGISGVFIFVINLLLDQF). The Extracellular portion of the chain corresponds to 175–185 (VSPEKHYGVNK). A helical membrane pass occupies residues 186–208 (AKLLYLYIICELCLILAIVFCVC). Residues 209 to 241 (NLDLTNKNNKKDEENKENNATLSYMELFKDSYK) lie on the Cytoplasmic side of the membrane. Residues 242 to 265 (AILTMFLVNWLTLQLFPGVGHKKW) form a helical membrane-spanning segment. The Extracellular segment spans residues 266-274 (QESHNISDY). Residues 275–294 (NVTIIVGMFQVFDFLSRYPP) form a helical membrane-spanning segment. Inosine-binding residues include Asp-287 and Arg-291. The Cytoplasmic segment spans residues 295–309 (NLTHIKIFKNFTFSL). The helical transmembrane segment at 310 to 330 (NKLLVANSLRLLFIPWFILNA) threads the bilayer. Residues 331 to 338 (CVDHPFFK) are Extracellular-facing. A helical membrane pass occupies residues 339–362 (NIVQQCVCMAMLAFTNGWFNTVPF). The Cytoplasmic portion of the chain corresponds to 363-374 (LVFVKELKKAKK). A helical transmembrane segment spans residues 375–397 (KKEIEIISTFLVIAMFVGLFCGI). Residues 398–422 (WTTYIYNLFNIVLPKPDLPPIDVTQ) are Extracellular-facing.

Belongs to the SLC29A/ENT transporter (TC 2.A.57) family.

It is found in the cell membrane. It carries out the reaction inosine(in) = inosine(out). It catalyses the reaction adenosine(in) = adenosine(out). The enzyme catalyses hypoxanthine(out) = hypoxanthine(in). The catalysed reaction is guanosine(in) = guanosine(out). It carries out the reaction guanine(out) = guanine(in). It catalyses the reaction thymidine(in) = thymidine(out). The enzyme catalyses uridine(out) = uridine(in). The catalysed reaction is uracil(in) = uracil(out). It carries out the reaction thymine(out) = thymine(in). It catalyses the reaction adenine(out) = adenine(in). The enzyme catalyses cytosine(out) = cytosine(in). The catalysed reaction is xanthine(out) = xanthine(in). With respect to regulation, GSK4 (5-methyl-N-[2-(2-oxo-1-azepanyl)ethyl]-2-phenyl-1,3-oxazole-4-carbox-amide) disrupts the transport activity at 500 nM. Inhibited partially by 10 uM dipyridamole. Inhibited partially by N,N'-1,3-benzothiazole-2,6-diyldi(2-furamide), 2-bromo-N-(4-[1,3]oxazolo[4,5-b]pyridin-2-ylphenyl)benzamide, 4-methyl-7-[(3,4,5-trimethoxybenzyl)oxy]-2H-chromen-2-one, 2-(1-methyl-1H-indol-3-yl)-2-oxo-N-[4-(pyrrolidin-1-ylcarbonyl)phenyl]acet amide and 2-[2-(2-methylphenyl)vinyl]-4(3H)-quinazolinone. In terms of biological role, sodium-independent nucleoside and nucleobase transporter with a broad substrate specificity. Plays a key role in the utilization of host purine sources by P.falciparum during intraerythrocytic development enabling parasite growth in the presence of physiological concentrations of adenosine, inosine, guanine, guanosine, xanthine and hypoxanthine. Essential for parasite transition from ring to trophozoite or from trophozoite to schizont stage but not for erythrocyte invasion by merozoites. The sequence is that of Nucleoside transporter 1 from Plasmodium falciparum (isolate 3D7).